A 243-amino-acid chain; its full sequence is tRNA pseudouridine synthase A (243 aa).

The Nucleophile role is filled by Asp-53. Position 111 (Tyr-111) interacts with substrate.

Belongs to the tRNA pseudouridine synthase TruA family. In terms of assembly, homodimer.

The enzyme catalyses uridine(38/39/40) in tRNA = pseudouridine(38/39/40) in tRNA. Formation of pseudouridine at positions 38, 39 and 40 in the anticodon stem and loop of transfer RNAs. This is tRNA pseudouridine synthase A from Pelodictyon phaeoclathratiforme (strain DSM 5477 / BU-1).